A 105-amino-acid polypeptide reads, in one-letter code: Small ribosomal subunit protein eS26 (105 aa).

It belongs to the eukaryotic ribosomal protein eS26 family. Component of the small ribosomal subunit.

The protein resides in the cytoplasm. The chain is Small ribosomal subunit protein eS26 (RPS26) from Encephalitozoon cuniculi (strain GB-M1) (Microsporidian parasite).